Consider the following 138-residue polypeptide: Acidic phospholipase A2 VpaPLA2 (138 aa).

An N-terminal signal peptide occupies residues 1 to 16 (MRTLWIVAVCLMGVEG). 7 disulfides stabilise this stretch: Cys42–Cys131, Cys44–Cys60, Cys59–Cys111, Cys65–Cys138, Cys66–Cys104, Cys73–Cys97, and Cys91–Cys102. Residues Tyr43, Gly45, and Gly47 each contribute to the Ca(2+) site. The active site involves His63. Asp64 contributes to the Ca(2+) binding site. The active site involves Asp105.

The protein belongs to the phospholipase A2 family. Group II subfamily. D49 sub-subfamily. Requires Ca(2+) as cofactor. As to expression, expressed by the venom gland.

The protein localises to the secreted. It carries out the reaction a 1,2-diacyl-sn-glycero-3-phosphocholine + H2O = a 1-acyl-sn-glycero-3-phosphocholine + a fatty acid + H(+). Its function is as follows. Snake venom phospholipase A2 (PLA2) that causes a sudden decrease of arterial blood pressure when injected into rat, but is not lethal. When co-injected with an uncharacterized basic protein (which did not show any enzymatic activity, but also causes a drop in blood pressure), this synergistical mixture is lethal. PLA2 catalyzes the calcium-dependent hydrolysis of the 2-acyl groups in 3-sn-phosphoglycerides. The polypeptide is Acidic phospholipase A2 VpaPLA2 (Daboia palaestinae (Palestine viper)).